A 512-amino-acid chain; its full sequence is Glutathione-binding protein GsiB (512 aa).

The signal sequence occupies residues 1–26; sequence MARAVHRSGLVALGIATALMASCAFA.

It belongs to the bacterial solute-binding protein 5 family. In terms of assembly, the complex is composed of two ATP-binding proteins (GsiA), two transmembrane proteins (GsiC and GsiD) and a solute-binding protein (GsiB).

The protein resides in the periplasm. In terms of biological role, part of the ABC transporter complex GsiABCD involved in glutathione import. Binds glutathione. This is Glutathione-binding protein GsiB from Escherichia coli O157:H7.